The sequence spans 124 residues: Multifunctional methyltransferase subunit TRM112 homolog B (124 aa).

In terms of domain architecture, TRM112 spans R2–H120.

It belongs to the TRM112 family. As to quaternary structure, interacts with TRM9. As to expression, expressed in anthers.

Acts as an activator of both rRNA/tRNA and protein methyltransferases. Required for TRM9 tRNA methyltransferase activity. The polypeptide is Multifunctional methyltransferase subunit TRM112 homolog B (Arabidopsis thaliana (Mouse-ear cress)).